The primary structure comprises 395 residues: MAKEHYERTKPHVNIGTIGHVDHGKTTLTAAITKVLAEKGLAEASDYASIDAAPEERERGITINTAHVEYETEKRHYAHIDAPGHADYVKNMITGAAQMDGAILVVAATDGPMPQTREHILLARQVGVEYIVVFLNKCDLVDDDELLDLVEMEVRDLLSEYDFPGDDIPVIRGSALKALEGDKDAEAQIMELMDTVDEYIPTPQRPTDKPFLMPVEDVFTITGRGTVASGRIDRGTVKVGDEVEIVGLKDDVVKTTVTGVEMFRKTLDEGEAGDNIGALLRGVDRTQVERGQVLAKPGSIQTHKKFKGEVYVLTKDEGGRHTPFFSNYRPQFYFHTTDVTGVIELPEGVEMVMPGDNVTFTVELIAPVAIEKGLKFTVREGGRTVGAGVVSEIDD.

The tr-type G domain occupies 10 to 204; it reads KPHVNIGTIG…TVDEYIPTPQ (195 aa). The tract at residues 19 to 26 is G1; it reads GHVDHGKT. 19–26 provides a ligand contact to GTP; sequence GHVDHGKT. Threonine 26 lines the Mg(2+) pocket. The segment at 60–64 is G2; sequence GITIN. The G3 stretch occupies residues 81-84; that stretch reads DAPG. Residues 81–85 and 136–139 each bind GTP; these read DAPGH and NKCD. Residues 136-139 are G4; the sequence is NKCD. A G5 region spans residues 174 to 176; that stretch reads SAL.

It belongs to the TRAFAC class translation factor GTPase superfamily. Classic translation factor GTPase family. EF-Tu/EF-1A subfamily. As to quaternary structure, monomer.

It is found in the cytoplasm. It carries out the reaction GTP + H2O = GDP + phosphate + H(+). GTP hydrolase that promotes the GTP-dependent binding of aminoacyl-tRNA to the A-site of ribosomes during protein biosynthesis. The protein is Elongation factor Tu of Ligilactobacillus salivarius (strain UCC118) (Lactobacillus salivarius).